Reading from the N-terminus, the 582-residue chain is ABC transporter-like protein ECU11_1340 (582 aa).

Residues 15-257 (VPNQNLSSNE…LGTKGIHNDG (243 aa)) enclose the ABC transporter domain. 47-54 (GTSGSGKT) is an ATP binding site. The 204-residue stretch at 316-519 (YVSFQMAIRQ…EIDAFISNFF (204 aa)) folds into the ABC transmembrane type-2 domain. The next 6 membrane-spanning stretches (helical) occupy residues 335–355 (ILYS…GKYI), 359–378 (FSIA…YVMN), 412–432 (TLVS…FGLI), 436–456 (HAFL…SMLF), 482–502 (GALL…SVIP), and 551–571 (SFLR…SSIL).

It belongs to the ABC transporter superfamily.

Its subcellular location is the membrane. This is ABC transporter-like protein ECU11_1340 from Encephalitozoon cuniculi (strain GB-M1) (Microsporidian parasite).